The sequence spans 515 residues: Kelch repeat protein M-T8 (515 aa).

Residues 16 to 82 (CDVEIVAEGK…MYTESIELHK (67 aa)) form the BTB domain. Kelch repeat units follow at residues 280–326 (VLYF…AIGG), 328–374 (IYII…CYKN), 376–423 (IWVL…VYKE), 424–471 (RLYC…VYND), and 473–512 (LYVF…YATY).

It belongs to the poxviruses Kelch family.

The sequence is that of Kelch repeat protein M-T8 from Oryctolagus cuniculus (Rabbit).